Here is a 127-residue protein sequence, read N- to C-terminus: UPF0102 protein Mmar10_3014 (127 aa).

It belongs to the UPF0102 family.

This Maricaulis maris (strain MCS10) (Caulobacter maris) protein is UPF0102 protein Mmar10_3014.